The sequence spans 224 residues: UPF0758 protein Csal_2972 (224 aa).

In terms of domain architecture, MPN spans 102–224 (ALTSPTLVRR…VVSFAERGWL (123 aa)). Zn(2+) is bound by residues H173, H175, and D186. The short motif at 173-186 (HNHPSGVAEPSDAD) is the JAMM motif element.

It belongs to the UPF0758 family.

The protein is UPF0758 protein Csal_2972 of Chromohalobacter salexigens (strain ATCC BAA-138 / DSM 3043 / CIP 106854 / NCIMB 13768 / 1H11).